A 117-amino-acid chain; its full sequence is Large ribosomal subunit protein bL20 (117 aa).

Belongs to the bacterial ribosomal protein bL20 family.

In terms of biological role, binds directly to 23S ribosomal RNA and is necessary for the in vitro assembly process of the 50S ribosomal subunit. It is not involved in the protein synthesizing functions of that subunit. The protein is Large ribosomal subunit protein bL20 of Marinobacter nauticus (strain ATCC 700491 / DSM 11845 / VT8) (Marinobacter aquaeolei).